The chain runs to 527 residues: Protein TIC 56, chloroplastic (527 aa).

A chloroplast-targeting transit peptide spans 1–48; the sequence is MSSMNFNPFQNWFEKPPNPVPSINFVSLADSFFPKSQSPNFASIGLPK. The disordered stretch occupies residues 43-67; the sequence is SIGLPKFSKKSPKPETAGTDEPGPY. Asn350 is modified (deamidated asparagine). Basic and acidic residues predominate over residues 491–508; the sequence is RREEELREEDLKHYSGRT. A disordered region spans residues 491 to 527; the sequence is RREEELREEDLKHYSGRTDEDEEEEEEEDDDSNSKKD. Positions 509–521 are enriched in acidic residues; it reads DEDEEEEEEEDDD.

In terms of assembly, part of the Tic complex. Component of the 1-MD complex, composed of TIC20-I, TIC214, TIC100 and TIC56. Interacts with the translocating preproteins. Hydrolysis of ATP is essential for the formation of this complex. The 1-MD complex interacts with TIC21.

It is found in the plastid. The protein localises to the chloroplast inner membrane. Its function is as follows. Involved in protein precursor import into chloroplasts. May be part of an intermediate translocation complex acting as a protein-conducting channel at the inner envelope. This chain is Protein TIC 56, chloroplastic, found in Arabidopsis thaliana (Mouse-ear cress).